Here is a 177-residue protein sequence, read N- to C-terminus: Putative zinc finger protein 826 (177 aa).

A C2H2-type 1; degenerate zinc finger spans residues 99–114 (KTFTWSSSPHKHRRTH). The C2H2-type 2; degenerate zinc finger occupies 120 to 142 (YKCEECGKAFTASSTLSEYKTIH). A C2H2-type 3 zinc finger spans residues 148–170 (CKCEECGKAFNWSSDFNKHKRIH).

It localises to the nucleus. Its function is as follows. May be involved in transcriptional regulation. In Homo sapiens (Human), this protein is Putative zinc finger protein 826 (ZNF826P).